The following is a 293-amino-acid chain: Ubiquinone biosynthesis protein COQ9-B, mitochondrial (293 aa).

Positions L21–Q73 are disordered. Residues P29–A38 show a composition bias toward polar residues. A compositionally biased stretch (acidic residues) spans A61 to E72. R219 contributes to the a 1,2-diacylglycero-3-phosphoethanolamine binding site.

Belongs to the COQ9 family. Homodimer. Heterodimer; two heterodimers of COQ7:COQ9 come together on the same side of the lipid pseudo-bilayer and form a curved tetramer with a hydrophobic surface suitable for membrane interaction. These two tetramers assemble into a soluble octamer with a pseudo-bilayer of lipids captured within. Interacts with COQ7; this interaction allows ubiquinone (CoQ) isoprene intermediates presentation to COQ7 and facilitates the COQ7-mediated hydroxylase step.

The protein resides in the mitochondrion. The protein operates within cofactor biosynthesis; ubiquinone biosynthesis. Functionally, membrane-associated protein that warps the membrane surface to access and bind aromatic isoprenes with high specificity, including ubiquinone (CoQ) isoprene intermediates and presents them directly to COQ7, therefore facilitating the COQ7-mediated hydroxylase step. Participates in the biosynthesis of coenzyme Q, also named ubiquinone, an essential lipid-soluble electron transporter for aerobic cellular respiration. This Xenopus laevis (African clawed frog) protein is Ubiquinone biosynthesis protein COQ9-B, mitochondrial (coq9-b).